A 90-amino-acid chain; its full sequence is MPRSVKKGPFVDHHLVKKVMEAQESGNKRPIKTWSRRSMILPDMIGLTIAVHNGKEHIPVYVSENMVGHKLGEFSMTRTYRGHAADKKSK.

The protein belongs to the universal ribosomal protein uS19 family.

Functionally, protein S19 forms a complex with S13 that binds strongly to the 16S ribosomal RNA. The protein is Small ribosomal subunit protein uS19 of Hydrogenovibrio crunogenus (strain DSM 25203 / XCL-2) (Thiomicrospira crunogena).